Reading from the N-terminus, the 312-residue chain is Transcription factor Ouib (312 aa).

A ZAD domain is found at 4-79 (IVCRVCGRQK…IKTQTKWLTI (76 aa)). Zn(2+)-binding residues include Cys6, Cys9, Cys52, and Cys55. C2H2-type zinc fingers lie at residues 167 to 189 (YICE…MRKH), 195 to 217 (FGCK…HRVH), 223 to 245 (FACR…ERTH), 251 to 273 (YVCE…MVIH), and 279 to 303 (FRCD…SMMH).

Expressed predominantly in the prothoracic gland during embryonic and larval development.

The protein resides in the nucleus. Functionally, transcription factor required for ecdysteroid production in the prothoracic gland by activating transcription of the ecdysteroid biosynthesis gene spok. Binds to the 5'-AGCTTTATTATTTAG-3' DNA sequence in the spok enhancer region. This is Transcription factor Ouib from Drosophila melanogaster (Fruit fly).